The chain runs to 384 residues: 3,7-dimethylxanthine N-methyltransferase 2 (384 aa).

8 residues coordinate S-adenosyl-L-homocysteine: Tyr18, Cys61, Asn66, Asp100, Leu101, Ser139, Phe140, and Cys156. Residue Tyr157 coordinates theobromine. Residue Cys158 participates in S-adenosyl-L-homocysteine binding. His160 and Trp161 together coordinate theobromine. Asn178 is a Mg(2+) binding site. Ser237 lines the theobromine pocket. Mg(2+) contacts are provided by Asp260, Phe262, and Asn263. Theobromine is bound at residue Tyr368.

It belongs to the methyltransferase superfamily. Type-7 methyltransferase family. Mg(2+) serves as cofactor. Highly expressed in developing endosperm. Detected in young leaves and flower buds. Present in immature fruits (grains), but barely in mature fruits.

It carries out the reaction 7-methylxanthine + S-adenosyl-L-methionine = theobromine + S-adenosyl-L-homocysteine + H(+). The catalysed reaction is theobromine + S-adenosyl-L-methionine = caffeine + S-adenosyl-L-homocysteine + H(+). It catalyses the reaction 1,7-dimethylxanthine + S-adenosyl-L-methionine = caffeine + S-adenosyl-L-homocysteine + H(+). It functions in the pathway alkaloid biosynthesis. Its function is as follows. Involved in the biosynthesis of caffeine. Catalyzes the conversion of 7-methylxanthine (7mX) to theobromine and of theobromine to caffeine. Has 1-N-methylation activity. This Coffea arabica (Arabian coffee) protein is 3,7-dimethylxanthine N-methyltransferase 2.